We begin with the raw amino-acid sequence, 418 residues long: uncharacterized protein (418 aa).

10 helical membrane passes run 51–71, 79–99, 110–130, 163–183, 224–244, 258–278, 289–309, 315–335, 356–376, and 379–399; these read FVMA…GALV, ALVV…PLFA, VTGI…LGAV, FFGP…SVLA, VIFG…LPLV, ALMS…AYVV, PIFL…TLSD, VGVQ…FPLV, ATGI…VVAG, and AAFM…LVAM.

Belongs to the major facilitator superfamily.

The protein localises to the cell membrane. This is an uncharacterized protein from Mycobacterium tuberculosis (strain CDC 1551 / Oshkosh).